We begin with the raw amino-acid sequence, 389 residues long: Chalcone synthase 1A (389 aa).

Residue C164 is part of the active site.

Belongs to the thiolase-like superfamily. Chalcone/stilbene synthases family.

It carries out the reaction (E)-4-coumaroyl-CoA + 3 malonyl-CoA + 3 H(+) = 2',4,4',6'-tetrahydroxychalcone + 3 CO2 + 4 CoA. Its pathway is secondary metabolite biosynthesis; flavonoid biosynthesis. In terms of biological role, the primary product of this enzyme is 4,2',4',6'-tetrahydroxychalcone (also termed naringenin-chalcone or chalcone) which can under specific conditions spontaneously isomerize into naringenin. The polypeptide is Chalcone synthase 1A (CHS-1A) (Pisum sativum (Garden pea)).